A 365-amino-acid polypeptide reads, in one-letter code: Cobalt-precorrin-5B C(1)-methyltransferase (365 aa).

This sequence belongs to the CbiD family.

It carries out the reaction Co-precorrin-5B + S-adenosyl-L-methionine = Co-precorrin-6A + S-adenosyl-L-homocysteine. Its pathway is cofactor biosynthesis; adenosylcobalamin biosynthesis; cob(II)yrinate a,c-diamide from sirohydrochlorin (anaerobic route): step 6/10. Functionally, catalyzes the methylation of C-1 in cobalt-precorrin-5B to form cobalt-precorrin-6A. In Pseudomonas fluorescens (strain ATCC BAA-477 / NRRL B-23932 / Pf-5), this protein is Cobalt-precorrin-5B C(1)-methyltransferase.